The chain runs to 136 residues: Protein PsiE (136 aa).

Transmembrane regions (helical) follow at residues 15–35, 55–75, 82–102, and 108–128; these read ILQTVLNLGLLCLGLILVVFL, YELVEGLVVYFLYFEFIALIV, FHFPLRYFVYIGITAIVRLII, and PLDVLIYSAAILLLVITLWLC.

Belongs to the PsiE family.

The protein resides in the cell inner membrane. In Escherichia coli (strain SE11), this protein is Protein PsiE.